The sequence spans 281 residues: sn-glycerol-3-phosphate transport system permease protein UgpE (281 aa).

A run of 6 helical transmembrane segments spans residues 16–36 (LILG…AATL), 85–105 (FSIT…IVWF), 113–133 (FFWM…FPTV), 142–162 (LDSY…TFLF), 202–222 (ALFV…LLII), and 247–267 (WNSV…IVLV). The ABC transmembrane type-1 domain maps to 77-268 (LLNSFVMAFS…IPPVVIVLVM (192 aa)).

It belongs to the binding-protein-dependent transport system permease family. UgpAE subfamily. The complex is composed of two ATP-binding proteins (UgpC), two transmembrane proteins (UgpA and UgpE) and a solute-binding protein (UgpB).

The protein localises to the cell inner membrane. Part of the ABC transporter complex UgpBAEC involved in sn-glycerol-3-phosphate (G3P) import. Probably responsible for the translocation of the substrate across the membrane. This is sn-glycerol-3-phosphate transport system permease protein UgpE (ugpE) from Shigella flexneri serotype 5b (strain 8401).